The primary structure comprises 418 residues: Gamma-glutamyl phosphate reductase (418 aa).

It belongs to the gamma-glutamyl phosphate reductase family.

It is found in the cytoplasm. It catalyses the reaction L-glutamate 5-semialdehyde + phosphate + NADP(+) = L-glutamyl 5-phosphate + NADPH + H(+). It participates in amino-acid biosynthesis; L-proline biosynthesis; L-glutamate 5-semialdehyde from L-glutamate: step 2/2. Catalyzes the NADPH-dependent reduction of L-glutamate 5-phosphate into L-glutamate 5-semialdehyde and phosphate. The product spontaneously undergoes cyclization to form 1-pyrroline-5-carboxylate. The polypeptide is Gamma-glutamyl phosphate reductase (Colwellia psychrerythraea (strain 34H / ATCC BAA-681) (Vibrio psychroerythus)).